Consider the following 284-residue polypeptide: Pantothenate synthetase (284 aa).

30 to 37 (MGNLHNAH) serves as a coordination point for ATP. H37 functions as the Proton donor in the catalytic mechanism. A (R)-pantoate-binding site is contributed by Q61. Q61 contributes to the beta-alanine binding site. 149–152 (GIKD) is an ATP binding site. Residue Q155 coordinates (R)-pantoate. Residues V178 and 186-189 (MSSR) each bind ATP.

It belongs to the pantothenate synthetase family. In terms of assembly, homodimer.

Its subcellular location is the cytoplasm. The catalysed reaction is (R)-pantoate + beta-alanine + ATP = (R)-pantothenate + AMP + diphosphate + H(+). Its pathway is cofactor biosynthesis; (R)-pantothenate biosynthesis; (R)-pantothenate from (R)-pantoate and beta-alanine: step 1/1. Functionally, catalyzes the condensation of pantoate with beta-alanine in an ATP-dependent reaction via a pantoyl-adenylate intermediate. This Saccharophagus degradans (strain 2-40 / ATCC 43961 / DSM 17024) protein is Pantothenate synthetase.